The following is a 115-amino-acid chain: NADH-ubiquinone oxidoreductase chain 3 (115 aa).

Transmembrane regions (helical) follow at residues 3–23 (LMITLLTNFTLATLLVTIAFW), 55–75 (FFLVAITFLLFDLEIALLLPL), and 84–104 (LNTMLTMALLLIFLLAVSLAY).

Belongs to the complex I subunit 3 family. Core subunit of respiratory chain NADH dehydrogenase (Complex I) which is composed of 45 different subunits. Interacts with TMEM186. Interacts with TMEM242.

Its subcellular location is the mitochondrion inner membrane. It carries out the reaction a ubiquinone + NADH + 5 H(+)(in) = a ubiquinol + NAD(+) + 4 H(+)(out). In terms of biological role, core subunit of the mitochondrial membrane respiratory chain NADH dehydrogenase (Complex I) which catalyzes electron transfer from NADH through the respiratory chain, using ubiquinone as an electron acceptor. Essential for the catalytic activity of complex I. This is NADH-ubiquinone oxidoreductase chain 3 from Ovis aries (Sheep).